A 435-amino-acid polypeptide reads, in one-letter code: Deoxybrevianamide E synthase (435 aa).

Positions 1–28 (MTAPELRAPAGHPQEPPARSSPAQALSS) are disordered. Residue glutamate 96 coordinates brevianamide F. The dimethylallyl diphosphate site is built by arginine 110, lysine 195, tyrosine 197, lysine 265, tyrosine 267, tyrosine 354, tyrosine 419, and tyrosine 423.

Belongs to the tryptophan dimethylallyltransferase family. Monomer.

It carries out the reaction brevianamide F + dimethylallyl diphosphate = deoxybrevianamide E + diphosphate. Its pathway is alkaloid biosynthesis. Deoxybrevianamide E synthase; part of the gene cluster that mediates the biosynthesis of notoamide, a fungal indole alkaloid that belongs to a family of natural products containing a characteristic bicyclo[2.2.2]diazaoctane core. The first step of notoamide biosynthesis involves coupling of L-proline and L-tryptophan by the bimodular NRPS notE', to produce cyclo-L-tryptophan-L-proline called brevianamide F. The reverse prenyltransferase notF' then acts as a deoxybrevianamide E synthase and converts brevianamide F to deoxybrevianamide E via reverse prenylation at C-2 of the indole ring leading to the bicyclo[2.2.2]diazaoctane core. Deoxybrevianamide E is further hydroxylated at C-6 of the indole ring, likely catalyzed by the cytochrome P450 monooxygenase notG', to yield 6-hydroxy-deoxybrevianamide E. 6-hydroxy-deoxybrevianamide E is a specific substrate of the prenyltransferase notC' for normal prenylation at C-7 to produce 6-hydroxy-7-prenyl-deoxybrevianamide, also called notoamide S. As the proposed pivotal branching point in notoamide biosynthesis, notoamide S can be diverted to notoamide E through an oxidative pyran ring closure putatively catalyzed by either notH' cytochrome P450 monooxygenase or the notD' FAD-linked oxidoreductase. This step would be followed by an indole 2,3-epoxidation-initiated pinacol-like rearrangement catalyzed by the notB' FAD-dependent monooxygenase leading to the formation of notoamide C and notoamide D. On the other hand notoamide S is converted to notoamide T by notH' (or notD'), a bifunctional oxidase that also functions as the intramolecular Diels-Alderase responsible for generation of (-)-notoamide T. To generate antipodal (+)-notoaminide T, notH (or notD) in Aspergillus strain MF297-2 is expected to catalyze a Diels-Alder reaction leading to the opposite stereochemistry. The remaining oxidoreductase notD' (or notH') likely catalyzes the oxidative pyran ring formation to yield (-)-stephacidin A. The FAD-dependent monooxygenase notI' is highly similar to notB' and is predicted to catalyze a similar conversion from (-)-stephacidin A to (+)-notoamide B via the 2,3-epoxidation of (-)-stephacidin A followed by a pinacol-type rearrangement. Finally, it remains unclear which enzyme could be responsible for the final hydroxylation steps leading to notoamide A and sclerotiamide. In Aspergillus versicolor, this protein is Deoxybrevianamide E synthase.